Here is a 274-residue protein sequence, read N- to C-terminus: Large ribosomal subunit protein uL2 (274 aa).

Residues 223–274 are disordered; the sequence is VVMNPVDHPHGGGEGRTSGGRHPVSPWGVPTKGYKTRSNKRTDKYIVRRRNK.

Belongs to the universal ribosomal protein uL2 family. As to quaternary structure, part of the 50S ribosomal subunit. Forms a bridge to the 30S subunit in the 70S ribosome.

One of the primary rRNA binding proteins. Required for association of the 30S and 50S subunits to form the 70S ribosome, for tRNA binding and peptide bond formation. It has been suggested to have peptidyltransferase activity; this is somewhat controversial. Makes several contacts with the 16S rRNA in the 70S ribosome. The polypeptide is Large ribosomal subunit protein uL2 (Vibrio cholerae serotype O1 (strain M66-2)).